A 129-amino-acid chain; its full sequence is UPF0344 protein SAB0838 (129 aa).

The next 4 helical transmembrane spans lie at 1 to 21 (MLHLHILSWVLAIILFIATYL), 36 to 56 (LHMVLRLFMLLMLISGFWILI), 67 to 87 (MLLTLKMLCGVAVVGLMEVSI), and 99 to 119 (MFWITIALIIITMVLGVILPL).

This sequence belongs to the UPF0344 family.

The protein resides in the cell membrane. This chain is UPF0344 protein SAB0838, found in Staphylococcus aureus (strain bovine RF122 / ET3-1).